We begin with the raw amino-acid sequence, 219 residues long: MESTEKLTDTNAILAYLYETFPLCFVAEGETKPLKIGLFQDLAERLADDSKVSKTQLRVALRRYTSSWRYLKCIKAGAVRVDLDGNPCGELEQEHIDHAQATLKESQDKAKAKRAERSKDEGDAADKAPRKPKRKPQPQARRDAKPAAKDKPKAAPKAPAVPINLVPAKLEELKVAQRVNVKLGMSPVAGSIVDINKGDVHVQLDSGLTVKVRAEYILL.

The disordered stretch occupies residues 102–160 (TLKESQDKAKAKRAERSKDEGDAADKAPRKPKRKPQPQARRDAKPAAKDKPKAAPKAPA). Basic and acidic residues-rich tracts occupy residues 105–129 (ESQD…DKAP) and 140–153 (ARRD…DKPK).

It belongs to the ProQ family.

It localises to the cytoplasm. In terms of biological role, RNA chaperone with significant RNA binding, RNA strand exchange and RNA duplexing activities. The sequence is that of RNA chaperone ProQ from Shewanella amazonensis (strain ATCC BAA-1098 / SB2B).